The chain runs to 121 residues: Flagellar hook-basal body complex protein FliE (121 aa).

Belongs to the FliE family.

It localises to the bacterial flagellum basal body. This chain is Flagellar hook-basal body complex protein FliE, found in Treponema denticola (strain ATCC 35405 / DSM 14222 / CIP 103919 / JCM 8153 / KCTC 15104).